Consider the following 795-residue polypeptide: Lon protease (795 aa).

Positions 11-203 constitute a Lon N-terminal domain; it reads GRVIPVSDIV…KFIDYLLKQK (193 aa). 356–363 contributes to the ATP binding site; sequence GPPGVGKT. The region spanning 593–771 is the Lon proteolytic domain; sequence DNVPGVVTGL…EDVLRETLGI (179 aa). Residues Ser-677 and Lys-720 contribute to the active site.

This sequence belongs to the peptidase S16 family. Homohexamer. Organized in a ring with a central cavity.

It is found in the cytoplasm. The catalysed reaction is Hydrolysis of proteins in presence of ATP.. In terms of biological role, ATP-dependent serine protease that mediates the selective degradation of mutant and abnormal proteins as well as certain short-lived regulatory proteins. Required for cellular homeostasis and for survival from DNA damage and developmental changes induced by stress. Degrades polypeptides processively to yield small peptide fragments that are 5 to 10 amino acids long. Binds to DNA in a double-stranded, site-specific manner. This chain is Lon protease, found in Clostridium beijerinckii (strain ATCC 51743 / NCIMB 8052) (Clostridium acetobutylicum).